Reading from the N-terminus, the 991-residue chain is Seizure protein 6 (991 aa).

An N-terminal signal peptide occupies residues 1-19 (MRPAALLLLPSLLALLAHG). The Extracellular segment spans residues 20–922 (LSSEAPITGE…AASSALDAAH (903 aa)). The segment at 79–193 (EGLEREEAPQ…QEGPGDMDRP (115 aa)) is disordered. Positions 119 to 132 (TSPTPAVAAAPTQP) are enriched in low complexity. Polar residues predominate over residues 175–184 (PPSQAWTPTQ). A disulfide bridge connects residues C241 and C268. Residues 241–353 (CSWNFSGPEG…HFRYQAYLLS (113 aa)) enclose the CUB 1 domain. The N-linked (GlcNAc...) asparagine glycan is linked to N286. One can recognise a Sushi 1 domain in the interval 352 to 411 (LSCHFPRRPAYGDVTVTSLHPGGSAHFHCATGYQLKGARFLTCLNATQPFWDSQEPVCIA). 12 cysteine pairs are disulfide-bonded: C354–C394, C380–C409, C413–C440, C529–C571, C556–C586, C590–C616, C707–C749, C735–C762, C768–C810, C796–C827, C835–C877, and C863–C892. Residues N396, N433, and N538 are each glycosylated (N-linked (GlcNAc...) asparagine). Residues 413-524 (CGGVIRNATT…AGMALRYEAF (112 aa)) form the CUB 2 domain. One can recognise a Sushi 2 domain in the interval 527 to 588 (GHCYEPFVKY…WNETEPACRA (62 aa)). The 112-residue stretch at 590-701 (CSGEITDSAG…QGFVIHFFEV (112 aa)) folds into the CUB 3 domain. Sushi domains lie at 705 to 764 (DTCP…SCQR), 766 to 829 (TSCH…KCLL), and 833 to 894 (KPCH…ICRA). Residues 923–943 (LAAAIFLPLVAMVLLVGGVYL) traverse the membrane as a helical segment. The Cytoplasmic portion of the chain corresponds to 944 to 991 (YFSRFQGKSPLQLPRTHPRPYNRITVESAFDNPTYETGSLSFAGDERI).

The protein belongs to the SEZ6 family. Glycosylated. In terms of tissue distribution, brain-specific. Expressed in extrasynaptic and synaptic subcellular fractions (at protein level). Expression correlates with the most active periods of cortical neurogenesis and neuronal maturation. Expression is restricted to the gray matter with higher levels in the forebrain including the olfactory bulb, anterior olfactory nuclei, olfactory tubercle, striatum, hippocampal CA1 pyramidal cell layer and cerebral cortex. Expression is up-regulated with the convulsant drug, pentylenetetrazole.

It localises to the cell membrane. The protein localises to the cell projection. It is found in the dendrite. The protein resides in the synapse. Its subcellular location is the secreted. It localises to the cytoplasm. Functionally, may play a role in cell-cell recognition and in neuronal membrane signaling. Seems to be important for the achievement of the necessary balance between dendrite elongation and branching during the elaboration of a complex dendritic arbor. Involved in the development of appropriate excitatory synaptic connectivity. The protein is Seizure protein 6 (Sez6) of Mus musculus (Mouse).